We begin with the raw amino-acid sequence, 612 residues long: Peroxisomal carnitine O-octanoyltransferase (612 aa).

Residue methionine 1 is modified to N-acetylmethionine. N6-succinyllysine occurs at positions 40 and 57. Histidine 327 functions as the Proton acceptor in the catalytic mechanism. Residues lysine 406 and 410 to 417 (KKEALHPD) each bind CoA. Lysine 406 carries the N6-acetyllysine; alternate modification. Lysine 406 carries the post-translational modification N6-succinyllysine; alternate. Tyrosine 439, threonine 441, and threonine 452 together coordinate (R)-carnitine. Positions 610–612 (AHL) match the Microbody targeting signal motif.

It belongs to the carnitine/choline acetyltransferase family. As to expression, liver.

The protein resides in the peroxisome. It catalyses the reaction octanoyl-CoA + (R)-carnitine = O-octanoyl-(R)-carnitine + CoA. It carries out the reaction 4,8-dimethylnonanoyl-CoA + (R)-carnitine = O-4,8-dimethylnonanoyl-(R)-carnitine + CoA. The protein operates within lipid metabolism; fatty acid beta-oxidation. Beta-oxidation of fatty acids. The highest activity concerns the C6 to C10 chain length substrate. The sequence is that of Peroxisomal carnitine O-octanoyltransferase (Crot) from Rattus norvegicus (Rat).